Consider the following 188-residue polypeptide: Pyridoxal 5'-phosphate synthase subunit PdxT (188 aa).

47–49 (GES) provides a ligand contact to L-glutamine. The active-site Nucleophile is the Cys-79. Residues Arg-105 and 134–135 (IR) contribute to the L-glutamine site. Catalysis depends on charge relay system residues His-170 and Glu-172.

The protein belongs to the glutaminase PdxT/SNO family. In the presence of PdxS, forms a dodecamer of heterodimers. Only shows activity in the heterodimer.

The enzyme catalyses aldehydo-D-ribose 5-phosphate + D-glyceraldehyde 3-phosphate + L-glutamine = pyridoxal 5'-phosphate + L-glutamate + phosphate + 3 H2O + H(+). It carries out the reaction L-glutamine + H2O = L-glutamate + NH4(+). The protein operates within cofactor biosynthesis; pyridoxal 5'-phosphate biosynthesis. Functionally, catalyzes the hydrolysis of glutamine to glutamate and ammonia as part of the biosynthesis of pyridoxal 5'-phosphate. The resulting ammonia molecule is channeled to the active site of PdxS. This chain is Pyridoxal 5'-phosphate synthase subunit PdxT, found in Listeria monocytogenes serotype 4b (strain F2365).